The chain runs to 503 residues: Probable cytosol aminopeptidase (503 aa).

Mn(2+) is bound by residues Lys-274 and Asp-279. Residue Lys-286 is part of the active site. Mn(2+) contacts are provided by Asp-297, Asp-356, and Glu-358. The active site involves Arg-360.

Belongs to the peptidase M17 family. It depends on Mn(2+) as a cofactor.

The protein resides in the cytoplasm. The enzyme catalyses Release of an N-terminal amino acid, Xaa-|-Yaa-, in which Xaa is preferably Leu, but may be other amino acids including Pro although not Arg or Lys, and Yaa may be Pro. Amino acid amides and methyl esters are also readily hydrolyzed, but rates on arylamides are exceedingly low.. The catalysed reaction is Release of an N-terminal amino acid, preferentially leucine, but not glutamic or aspartic acids.. Functionally, presumably involved in the processing and regular turnover of intracellular proteins. Catalyzes the removal of unsubstituted N-terminal amino acids from various peptides. This chain is Probable cytosol aminopeptidase, found in Burkholderia mallei (strain SAVP1).